The following is a 488-amino-acid chain: Monothiol glutaredoxin-S17 (488 aa).

The 106-residue stretch at 2–107 (SGTVKDIVSK…LANKVGKVAG (106 aa)) folds into the Thioredoxin domain. 3 Glutaredoxin domains span residues 154 to 256 (KSRL…GITT), 284 to 386 (RARL…GITG), and 391 to 488 (EDRL…TLSE). Lysine 408 provides a ligand contact to glutathione. [2Fe-2S] cluster is bound at residue cysteine 416. Glutathione is bound by residues arginine 445, phenylalanine 457, and 470–471 (CD).

It belongs to the glutaredoxin family. CGFS subfamily. [2Fe-2S]-bridged holo-homodimer. Interacts in vitro with SUFE1, BOLA1, BOLA2 and BOLA4. Interacts in vivo only with BOLA2. Interacts with RGLG3 and RGLG4. Post-translationally, ubiquitinated at Lys-154. Polyubiquitinated by RGLG3 and RGLG4. Polyubiquitination of GRXS17 leads to its degradation by the proteasome.

It localises to the cytoplasm. Its function is as follows. May only reduce GSH-thiol disulfides, but not protein disulfides. Participates probably to the maturation of iron-sulfur proteins and to the regulation of the redox state of the BOLA proteins. The GRXS17-BOLA2 heterodimer binds a labile, oxygen sensitive iron-sulfur cluster. The protein is Monothiol glutaredoxin-S17 of Arabidopsis thaliana (Mouse-ear cress).